Here is a 673-residue protein sequence, read N- to C-terminus: MSKMFKLNSAFRPSGDQPEAIRRLKEGLEDGLAHQTLLGVTGSGKTFTVANVIADLQRPTMVLAPNKTLAAQLYGEMKEFFPDNAVEYFVSYYDYYQPEAYVPSSDTFIEKDASVNEHIEQMRLSATKALLERRDVIVVASVSAIYGLGDPDLYLKMMLHLTNGMIIDQRAILRRLAELQYARNDQAFQRGTFRVRGEVIDIFPAESDDLALRVELFDEEVERLSLFDPLTGHVDSVIQRFTVYPKTHYVTPRERIVQAMEDIKVELAERRKVLLENNKLLEEQRLSQRTQFDLEMMNELGYCSGIENYSRYLSGRGPGEAPPTLFDYLPADGLLVVDESHVTIPQIGGMYRGDRARKETLVEYGFRLPSALDNRPMKFEEFEALAPQTIYVSATPGNYELEKSGEDVVDQVVRPTGLLDPIIEVRPVGTQVDDLLSEIRARAIINERVLVTTLTKRMAEDLTEYLEEHGERVRYLHSDIDTVERMEIIRDLRLGEFDVLVGINLLREGLDMPEVSLVAILDADKEGFLRSERSLIQTIGRAARNINGKAILYGDRITASMAKAISETERRREKQHQYNLDNGIVPQGLNKKVVDILALGQGLAKTKAKGRGKSRSPVEADPVELVLTPKALQQKIHELEGLMMQHAQNLEFEEAAQVRDQLHQLRQLFIAAS.

The Helicase ATP-binding domain occupies 26-183; that stretch reads EGLEDGLAHQ…RRLAELQYAR (158 aa). 39-46 provides a ligand contact to ATP; it reads GVTGSGKT. Positions 92–115 match the Beta-hairpin motif; the sequence is YYDYYQPEAYVPSSDTFIEKDASV. The 167-residue stretch at 431-597 folds into the Helicase C-terminal domain; sequence QVDDLLSEIR…GLNKKVVDIL (167 aa). Positions 633–668 constitute a UVR domain; the sequence is QQKIHELEGLMMQHAQNLEFEEAAQVRDQLHQLRQL.

This sequence belongs to the UvrB family. As to quaternary structure, forms a heterotetramer with UvrA during the search for lesions. Interacts with UvrC in an incision complex.

It is found in the cytoplasm. Its function is as follows. The UvrABC repair system catalyzes the recognition and processing of DNA lesions. A damage recognition complex composed of 2 UvrA and 2 UvrB subunits scans DNA for abnormalities. Upon binding of the UvrA(2)B(2) complex to a putative damaged site, the DNA wraps around one UvrB monomer. DNA wrap is dependent on ATP binding by UvrB and probably causes local melting of the DNA helix, facilitating insertion of UvrB beta-hairpin between the DNA strands. Then UvrB probes one DNA strand for the presence of a lesion. If a lesion is found the UvrA subunits dissociate and the UvrB-DNA preincision complex is formed. This complex is subsequently bound by UvrC and the second UvrB is released. If no lesion is found, the DNA wraps around the other UvrB subunit that will check the other stand for damage. The sequence is that of UvrABC system protein B from Enterobacter sp. (strain 638).